We begin with the raw amino-acid sequence, 329 residues long: GTP 3',8-cyclase (329 aa).

Positions 8–234 (AFARKFYYLR…QLRQRSDGPA (227 aa)) constitute a Radical SAM core domain. R17 serves as a coordination point for GTP. [4Fe-4S] cluster-binding residues include C24 and C28. Residue Y30 participates in S-adenosyl-L-methionine binding. Residue C31 coordinates [4Fe-4S] cluster. R68 provides a ligand contact to GTP. S-adenosyl-L-methionine is bound at residue G72. T99 contacts GTP. An S-adenosyl-L-methionine-binding site is contributed by S123. K160 is a binding site for GTP. Residue M194 coordinates S-adenosyl-L-methionine. [4Fe-4S] cluster-binding residues include C257 and C260. Position 262-264 (262-264 (RLR)) interacts with GTP. C274 lines the [4Fe-4S] cluster pocket.

The protein belongs to the radical SAM superfamily. MoaA family. In terms of assembly, monomer and homodimer. [4Fe-4S] cluster is required as a cofactor.

The catalysed reaction is GTP + AH2 + S-adenosyl-L-methionine = (8S)-3',8-cyclo-7,8-dihydroguanosine 5'-triphosphate + 5'-deoxyadenosine + L-methionine + A + H(+). Its pathway is cofactor biosynthesis; molybdopterin biosynthesis. Its function is as follows. Catalyzes the cyclization of GTP to (8S)-3',8-cyclo-7,8-dihydroguanosine 5'-triphosphate. This chain is GTP 3',8-cyclase, found in Shigella dysenteriae serotype 1 (strain Sd197).